Reading from the N-terminus, the 502-residue chain is Ribose import ATP-binding protein RbsA (502 aa).

2 consecutive ABC transporter domains span residues 3–239 and 249–493; these read VTMR…VGRE and AAPG…TGGA. 35–42 contacts ATP; sequence GENGAGKS.

The protein belongs to the ABC transporter superfamily. Ribose importer (TC 3.A.1.2.1) family. As to quaternary structure, the complex is composed of an ATP-binding protein (RbsA), two transmembrane proteins (RbsC) and a solute-binding protein (RbsB).

The protein resides in the cell inner membrane. The enzyme catalyses D-ribose(out) + ATP + H2O = D-ribose(in) + ADP + phosphate + H(+). Part of the ABC transporter complex RbsABC involved in ribose import. Responsible for energy coupling to the transport system. In Chromobacterium violaceum (strain ATCC 12472 / DSM 30191 / JCM 1249 / CCUG 213 / NBRC 12614 / NCIMB 9131 / NCTC 9757 / MK), this protein is Ribose import ATP-binding protein RbsA.